Consider the following 867-residue polypeptide: Bifunctional diterpene synthase, chloroplastic (867 aa).

The transit peptide at 1–55 directs the protein to the chloroplast; the sequence is MAKVLFSSFQQTGISGSLKSGQLSGVFINGTNLKSNAHAKRFRKNSTSSITIRCC. Position 255 (lysine 255) interacts with substrate. Residues aspartate 389 and aspartate 391 each coordinate Mg(2+). The DXDD motif motif lies at 389-392; it reads DIDD. Lysine 474 is a binding site for substrate. Aspartate 611, aspartate 615, asparagine 758, threonine 762, and glutamate 766 together coordinate Mg(2+). The DDXXD motif signature appears at 611-615; it reads DDLMD.

It belongs to the terpene synthase family. Mg(2+) serves as cofactor.

It is found in the plastid. The protein resides in the chloroplast. It catalyses the reaction (+)-copalyl diphosphate = miltiradiene + diphosphate. The catalysed reaction is (2E,6E,10E)-geranylgeranyl diphosphate = (+)-copalyl diphosphate. The protein operates within secondary metabolite biosynthesis; terpenoid biosynthesis. In terms of biological role, bifunctional diterpene cyclase that catalyzes the successive two-step type-B (protonation-initiated cyclization) and type-A (ionization-initiated cyclization) reactions of geranylgeranyl diphosphate (GGDP) producing successively (+)-copalyl diphosphate and miltiradiene. The sequence is that of Bifunctional diterpene synthase, chloroplastic (MDS) from Selaginella moellendorffii (Spikemoss).